The primary structure comprises 172 residues: 3-hydroxydecanoyl-[acyl-carrier-protein] dehydratase (172 aa).

The active site involves histidine 70.

Belongs to the thioester dehydratase family. FabA subfamily. In terms of assembly, homodimer.

The protein resides in the cytoplasm. The catalysed reaction is a (3R)-hydroxyacyl-[ACP] = a (2E)-enoyl-[ACP] + H2O. It carries out the reaction (3R)-hydroxydecanoyl-[ACP] = (2E)-decenoyl-[ACP] + H2O. It catalyses the reaction (2E)-decenoyl-[ACP] = (3Z)-decenoyl-[ACP]. Its pathway is lipid metabolism; fatty acid biosynthesis. In terms of biological role, necessary for the introduction of cis unsaturation into fatty acids. Catalyzes the dehydration of (3R)-3-hydroxydecanoyl-ACP to E-(2)-decenoyl-ACP and then its isomerization to Z-(3)-decenoyl-ACP. Can catalyze the dehydratase reaction for beta-hydroxyacyl-ACPs with saturated chain lengths up to 16:0, being most active on intermediate chain length. This chain is 3-hydroxydecanoyl-[acyl-carrier-protein] dehydratase, found in Xylella fastidiosa (strain M12).